Here is a 638-residue protein sequence, read N- to C-terminus: Chaperone protein DnaK (638 aa).

Thr198 bears the Phosphothreonine; by autocatalysis mark. The segment at 598 to 638 (YEASQKEAAEADAKADAAKDSDVVDADFEEIDEDDDKKKSA) is disordered. The segment covering 601 to 619 (SQKEAAEADAKADAAKDSD) has biased composition (basic and acidic residues). Positions 620–632 (VVDADFEEIDEDD) are enriched in acidic residues.

This sequence belongs to the heat shock protein 70 family.

Functionally, acts as a chaperone. This Mesorhizobium japonicum (strain LMG 29417 / CECT 9101 / MAFF 303099) (Mesorhizobium loti (strain MAFF 303099)) protein is Chaperone protein DnaK.